The primary structure comprises 556 residues: Peptide chain release factor 3 (556 aa).

The tr-type G domain occupies 28–297 (QQRRNFAIIS…AFLDYALKPG (270 aa)). Residues 37-44 (SHPDAGKT), 105-109 (DTPGH), and 159-162 (NKMD) contribute to the GTP site.

It belongs to the TRAFAC class translation factor GTPase superfamily. Classic translation factor GTPase family. PrfC subfamily.

It is found in the cytoplasm. Increases the formation of ribosomal termination complexes and stimulates activities of RF-1 and RF-2. It binds guanine nucleotides and has strong preference for UGA stop codons. It may interact directly with the ribosome. The stimulation of RF-1 and RF-2 is significantly reduced by GTP and GDP, but not by GMP. The chain is Peptide chain release factor 3 from Synechococcus elongatus (strain ATCC 33912 / PCC 7942 / FACHB-805) (Anacystis nidulans R2).